We begin with the raw amino-acid sequence, 238 residues long: Ribitol-5-phosphate cytidylyltransferase 1 (238 aa).

CTP is bound by residues 7-10 and 81-87; these read LAGG and GSDRNDT.

It belongs to the IspD/TarI cytidylyltransferase family. TarI subfamily.

The enzyme catalyses D-ribitol 5-phosphate + CTP + H(+) = CDP-L-ribitol + diphosphate. It participates in cell wall biogenesis; poly(ribitol phosphate) teichoic acid biosynthesis. Its function is as follows. Catalyzes the transfer of the cytidylyl group of CTP to D-ribitol 5-phosphate. The sequence is that of Ribitol-5-phosphate cytidylyltransferase 1 from Staphylococcus aureus (strain bovine RF122 / ET3-1).